We begin with the raw amino-acid sequence, 527 residues long: MKKSYLATSLTLSIAVGVSGFTSVPAFAKTKIDYHKQWDTPQYIGEVWEPEGAKGDDVVWSYLEKYKDEFRIQGNVEDHFEIVNEARNKETDTKHYRLQEVYNGIPIYGFQQTVHIDADGNVTSFLGQFIPDLDSNKQLKKKPKLNEQKAVKQAIKDVEGEVGEKPDFIQDPEAKLYIYVHEDESYLAYAVELNFLDPEPGRWMYFIDAHSGDVINKYNMLDHVTATGKGVLGDTKQFETTKQGSTYMLKDTTRGKGIETYTANNRTSLPGTLMTDSDNYWTDGAAVDAHAHAQKTYDYFRNVHNRNSYDGNGAVIRSTVHYSTRYNNAFWNGSQMVYGDGDGTTFLPLSGGLDVVAHELTHAVTERTAGLVYQNESGALNESMSDIFGAMVDNDDWLMGEDIYTPGRSGDALRSLQDPAAYGDPDHYSKRYTGSQDNGGVHTNSGINNKAAYLLAEGGTHYGVRVNGIGRTDTAKIYYHALTHYLTPYSNFSAMRRAAVLSATDLFGANSRQVQAVNAAYDAVGVK.

The first 28 residues, 1–28 (MKKSYLATSLTLSIAVGVSGFTSVPAFA), serve as a signal peptide directing secretion. Positions 29-223 (KTKIDYHKQW…VINKYNMLDH (195 aa)) are cleaved as a propeptide — activation peptide. D276, D278, and D354 together coordinate Ca(2+). A Zn(2+)-binding site is contributed by H358. E359 is an active-site residue. Positions 362 and 382 each coordinate Zn(2+). The Ca(2+) site is built by D393, N394, D396, E401, Y404, T405, and D411. H442 acts as the Proton donor in catalysis.

The protein belongs to the peptidase M4 family. It depends on Ca(2+) as a cofactor. Zn(2+) serves as cofactor.

The protein localises to the secreted. It carries out the reaction Similar, but not identical, to that of thermolysin.. Its function is as follows. Extracellular zinc metalloprotease. The protein is Bacillolysin (npr) of Brevibacillus brevis (Bacillus brevis).